The sequence spans 635 residues: Early transcription factor 70 kDa subunit (635 aa).

The 154-residue stretch at 32-185 (RSIIDENKSV…SNIISLMSDE (154 aa)) folds into the Helicase ATP-binding domain. 45 to 52 (HIMGSGKT) provides a ligand contact to ATP. Positions 135-138 (DEAH) match the DEXH box motif. One can recognise a Helicase C-terminal domain in the interval 326-505 (KFKYFITKIE…TLPFDIKKLL (180 aa)).

The protein belongs to the helicase family. VETF subfamily. Heterodimer of a 70 kDa and a 82 kDa subunit. Part of the early transcription complex composed of ETF, RAP94, and the DNA-directed RNA polymerase.

Its subcellular location is the virion. Acts with RNA polymerase to initiate transcription from early gene promoters. Is recruited by the RPO-associated protein of 94 kDa (RAP94) to form the early transcription complex, which also contains the core RNA polymerase. ETF heterodimer binds to early gene promoters. This is Early transcription factor 70 kDa subunit (VETFS) from Oryctolagus cuniculus (Rabbit).